The chain runs to 518 residues: D-aminopeptidase (518 aa).

Ser-62 serves as the catalytic Nucleophile. Lys-65 (proton donor/acceptor) is an active-site residue. Residues 373–392 (FGTGPEKMDISGENEAQSSM) form a disordered region. Residues 477-487 (QRSMDAPSPGE) form an important for specificity region. Substrate is bound at residue Asp-481.

It belongs to the peptidase S12 family. In terms of assembly, homodimer.

It catalyses the reaction Release of an N-terminal D-amino acid from a peptide, Xaa-|-Yaa-, in which Xaa is preferably D-Ala, D-Ser or D-Thr. D-amino acid amides and methyl esters also are hydrolyzed, as is glycine amide.. Inhibited by beta-lactam compounds such as 6-aminopenicillic acid, 7-aminocephalosporanic acid, benzylpenicillin and ampicillin. Inhibited by p-chloromercuribenzoate. Hydrolyzes N-terminal residues in D-amino acid-containing peptides. This Brucella melitensis biotype 2 (strain ATCC 23457) protein is D-aminopeptidase.